Reading from the N-terminus, the 188-residue chain is Adenine phosphoribosyltransferase (188 aa).

The protein belongs to the purine/pyrimidine phosphoribosyltransferase family. In terms of assembly, homodimer.

Its subcellular location is the cytoplasm. The enzyme catalyses AMP + diphosphate = 5-phospho-alpha-D-ribose 1-diphosphate + adenine. It functions in the pathway purine metabolism; AMP biosynthesis via salvage pathway; AMP from adenine: step 1/1. Catalyzes a salvage reaction resulting in the formation of AMP, that is energically less costly than de novo synthesis. This Paraburkholderia phymatum (strain DSM 17167 / CIP 108236 / LMG 21445 / STM815) (Burkholderia phymatum) protein is Adenine phosphoribosyltransferase.